The sequence spans 33 residues: Photosystem II reaction center protein Psb30 (33 aa).

Residues Leu5 to Leu25 form a helical membrane-spanning segment.

Belongs to the Psb30/Ycf12 family. In terms of assembly, PSII is composed of 1 copy each of membrane proteins PsbA, PsbB, PsbC, PsbD, PsbE, PsbF, PsbH, PsbI, PsbJ, PsbK, PsbL, PsbM, PsbT, PsbX, PsbY, PsbZ, Psb30/Ycf12, peripheral proteins of the oxygen-evolving complex and a large number of cofactors. It forms dimeric complexes.

The protein localises to the plastid. Its subcellular location is the chloroplast thylakoid membrane. Its function is as follows. A core subunit of photosystem II (PSII), required for optimal photosynthesis, probably helps stabilize the reaction center. This Chlamydomonas reinhardtii (Chlamydomonas smithii) protein is Photosystem II reaction center protein Psb30.